Reading from the N-terminus, the 361-residue chain is Adenosine kinase (361 aa).

The Nuclear localization signal motif lies at 7-15 (PKPKKLKVE). Asp-34 lines the adenosine pocket. Ser-48 lines the Mg(2+) pocket. At Tyr-76 the chain carries Phosphotyrosine. Asn-147 serves as a coordination point for Mg(2+). Gln-305 contacts adenosine. The active site involves Asp-316. Catalysis depends on Asp-316, which acts as the Proton acceptor.

The protein belongs to the carbohydrate kinase PfkB family. Monomer. Mg(2+) is required as a cofactor.

Its subcellular location is the nucleus. The enzyme catalyses adenosine + ATP = AMP + ADP + H(+). Its pathway is purine metabolism; AMP biosynthesis via salvage pathway; AMP from adenosine: step 1/1. Functionally, catalyzes the phosphorylation of the purine nucleoside adenosine at the 5' position in an ATP-dependent manner. Serves as a potential regulator of concentrations of extracellular adenosine and intracellular adenine nucleotides. The chain is Adenosine kinase (Adk) from Rattus norvegicus (Rat).